The chain runs to 130 residues: Small ribosomal subunit protein uS8 (130 aa).

Belongs to the universal ribosomal protein uS8 family. In terms of assembly, component of the 40S ribosomal subunit. Part of the small subunit (SSU) processome, composed of more than 70 proteins and the RNA chaperone small nucleolar RNA (snoRNA) U3.

It is found in the cytoplasm. It localises to the nucleus. Its subcellular location is the nucleolus. In terms of biological role, component of the small ribosomal subunit. Part of the small subunit (SSU) processome, first precursor of the small eukaryotic ribosomal subunit. During the assembly of the SSU processome in the nucleolus, many ribosome biogenesis factors, an RNA chaperone and ribosomal proteins associate with the nascent pre-rRNA and work in concert to generate RNA folding, modifications, rearrangements and cleavage as well as targeted degradation of pre-ribosomal RNA by the RNA exosome. Required for erythropoiesis during embryonic development. This chain is Small ribosomal subunit protein uS8, found in Danio rerio (Zebrafish).